The primary structure comprises 413 residues: Alpha-1-antitrypsin-like protein CM55-ST (413 aa).

The first 24 residues, 1 to 24 (MPSSISWGLLLLAALSCLGPGSLA), serve as a signal peptide directing secretion. At Q25 the chain carries Pyrrolidone carboxylic acid. N65, N102, N165, and N266 each carry an N-linked (GlcNAc...) asparagine glycan. An RCL region spans residues 368–387 (GGTVLGNIRSTLRYEVIFDR).

Belongs to the serpin family. As to expression, expressed in liver.

The protein is Alpha-1-antitrypsin-like protein CM55-ST of Tamias sibiricus (Siberian chipmunk).